A 74-amino-acid polypeptide reads, in one-letter code: Kappa-scoloptoxin(03)-Ssm1a (74 aa).

Residues 1–23 (MNSSIAILLVMALIMFSLDKSYS) form the signal peptide. 3 cysteine pairs are disulfide-bonded: Cys-32–Cys-59, Cys-42–Cys-58, and Cys-45–Cys-68.

This sequence belongs to the scoloptoxin-03 family. Expressed by the venom gland.

The protein resides in the secreted. This toxin inhibits voltage-gated potassium channel currents in DRG neurons (IC(50)=44.2 nM). In vivo, insects injected with this toxin showed signs of neurotoxicity including twitching, paralysis, and body contraction. The sequence is that of Kappa-scoloptoxin(03)-Ssm1a from Scolopendra mutilans (Chinese red-headed centipede).